Consider the following 138-residue polypeptide: ATP synthase epsilon chain (138 aa).

The protein belongs to the ATPase epsilon chain family. As to quaternary structure, F-type ATPases have 2 components, CF(1) - the catalytic core - and CF(0) - the membrane proton channel. CF(1) has five subunits: alpha(3), beta(3), gamma(1), delta(1), epsilon(1). CF(0) has three main subunits: a, b and c.

The protein localises to the cell inner membrane. In terms of biological role, produces ATP from ADP in the presence of a proton gradient across the membrane. The protein is ATP synthase epsilon chain of Geotalea uraniireducens (strain Rf4) (Geobacter uraniireducens).